A 317-amino-acid chain; its full sequence is Porphobilinogen deaminase (317 aa).

Residue C245 is modified to S-(dipyrrolylmethanemethyl)cysteine.

The protein belongs to the HMBS family. Monomer. It depends on dipyrromethane as a cofactor.

It carries out the reaction 4 porphobilinogen + H2O = hydroxymethylbilane + 4 NH4(+). It participates in porphyrin-containing compound metabolism; protoporphyrin-IX biosynthesis; coproporphyrinogen-III from 5-aminolevulinate: step 2/4. The protein operates within porphyrin-containing compound metabolism; chlorophyll biosynthesis. Functionally, tetrapolymerization of the monopyrrole PBG into the hydroxymethylbilane pre-uroporphyrinogen in several discrete steps. This chain is Porphobilinogen deaminase, found in Prochlorococcus marinus (strain MIT 9303).